The sequence spans 311 residues: NAD kinase (311 aa).

The active-site Proton acceptor is the Asp-67. NAD(+) contacts are provided by residues 67-68 (DG), Arg-72, 140-141 (ND), Arg-151, Asp-170, 181-186 (TAYSLS), and Gln-240. The span at 278 to 287 (LKEGGSRQDD) shows a compositional bias: basic and acidic residues. The tract at residues 278–311 (LKEGGSRQDDENPAATVNPETDSKYPHSHPGSTG) is disordered.

Belongs to the NAD kinase family. Requires a divalent metal cation as cofactor.

The protein localises to the cytoplasm. The enzyme catalyses NAD(+) + ATP = ADP + NADP(+) + H(+). In terms of biological role, involved in the regulation of the intracellular balance of NAD and NADP, and is a key enzyme in the biosynthesis of NADP. Catalyzes specifically the phosphorylation on 2'-hydroxyl of the adenosine moiety of NAD to yield NADP. This Moorella thermoacetica (strain ATCC 39073 / JCM 9320) protein is NAD kinase.